The sequence spans 1099 residues: Protein DDB_G0287365 (1099 aa).

A signal peptide spans 1 to 24 (MMSFNLILILIIFLILIQNYVIDG). The G8 domain occupies 47-174 (KSWKKLKLPI…TKTTWTKLIS (128 aa)). N-linked (GlcNAc...) asparagine glycans are attached at residues asparagine 62, asparagine 137, asparagine 664, asparagine 764, and asparagine 858.

Belongs to the CEMIP family.

This is Protein DDB_G0287365 from Dictyostelium discoideum (Social amoeba).